The chain runs to 89 residues: Small ribosomal subunit protein uS15 (89 aa).

It belongs to the universal ribosomal protein uS15 family. In terms of assembly, part of the 30S ribosomal subunit. Forms a bridge to the 50S subunit in the 70S ribosome, contacting the 23S rRNA.

In terms of biological role, one of the primary rRNA binding proteins, it binds directly to 16S rRNA where it helps nucleate assembly of the platform of the 30S subunit by binding and bridging several RNA helices of the 16S rRNA. Functionally, forms an intersubunit bridge (bridge B4) with the 23S rRNA of the 50S subunit in the ribosome. The chain is Small ribosomal subunit protein uS15 from Kocuria rhizophila (strain ATCC 9341 / DSM 348 / NBRC 103217 / DC2201).